The chain runs to 119 residues: Fluoride-specific ion channel FluC 2 (119 aa).

4 helical membrane passes run 1–21, 33–53, 56–76, and 93–113; these read MITV…RYGI, FPYA…FIFS, FSPF…TTFS, and VFTL…FLGY. G70 and T73 together coordinate Na(+).

The protein belongs to the fluoride channel Fluc/FEX (TC 1.A.43) family.

It is found in the cell membrane. It carries out the reaction fluoride(in) = fluoride(out). Its activity is regulated as follows. Na(+) is not transported, but it plays an essential structural role and its presence is essential for fluoride channel function. Fluoride-specific ion channel. Important for reducing fluoride concentration in the cell, thus reducing its toxicity. This chain is Fluoride-specific ion channel FluC 2, found in Lactobacillus johnsonii (strain CNCM I-12250 / La1 / NCC 533).